Consider the following 219-residue polypeptide: Membrin-12 (219 aa).

A2 is modified (N-acetylalanine). At 2–197 (ASGTVGGLSE…LIERRNRVDT (196 aa)) the chain is on the cytoplasmic side. Residues 198-215 (WIKYAGMIATLVILYLFI) form a helical; Anchor for type IV membrane protein membrane-spanning segment. At 216 to 219 (RWTR) the chain is on the vesicular side.

It belongs to the GOSR2 family.

It localises to the golgi apparatus membrane. In terms of biological role, involved in transport of proteins from the cis/medial-Golgi to the trans-Golgi network. The protein is Membrin-12 (MEMB12) of Arabidopsis thaliana (Mouse-ear cress).